The sequence spans 786 residues: Endonuclease MutS2 (786 aa).

333 to 340 (GPNTGGKT) is an ATP binding site. The segment at 682–709 (EKIKPSKQSAAQRPVVKVSGGGMSGPST) is disordered. The 76-residue stretch at 711 to 786 (LDLRGERYDQ…GSGATIVNFK (76 aa)) folds into the Smr domain.

The protein belongs to the DNA mismatch repair MutS family. MutS2 subfamily. In terms of assembly, homodimer. Binds to stalled ribosomes, contacting rRNA.

Functionally, endonuclease that is involved in the suppression of homologous recombination and thus may have a key role in the control of bacterial genetic diversity. Its function is as follows. Acts as a ribosome collision sensor, splitting the ribosome into its 2 subunits. Detects stalled/collided 70S ribosomes which it binds and splits by an ATP-hydrolysis driven conformational change. Acts upstream of the ribosome quality control system (RQC), a ribosome-associated complex that mediates the extraction of incompletely synthesized nascent chains from stalled ribosomes and their subsequent degradation. Probably generates substrates for RQC. This Lacticaseibacillus casei (strain BL23) (Lactobacillus casei) protein is Endonuclease MutS2.